The following is a 401-amino-acid chain: Dynactin subunit 2 (401 aa).

Residues 1–25 (MADPKYADLPGIARNEPDVYETSDL) form a disordered region. Ala-2 carries the post-translational modification N-acetylalanine. Position 6 is a phosphotyrosine (Tyr-6). The residue at position 83 (Ser-83) is a Phosphoserine. Tyr-86 bears the Phosphotyrosine mark. Positions 99–132 (PQQKYQRLLHEVQELTTEVEKIKTTVKESATEEK) form a coiled coil. Thr-134 and Thr-198 each carry phosphothreonine. Residues 214–244 (EQDKFSQAAKVAELEKRLTELETAVRCDQDA) are a coiled coil. At Ser-320 the chain carries Phosphoserine. A coiled-coil region spans residues 379–399 (RENLATVEGNFASIDERMKKL).

The protein belongs to the dynactin subunit 2 family. Subunit of dynactin, a multiprotein complex part of a tripartite complex with dynein and a adapter, such as BICDL1, BICD2 or HOOK3. The dynactin complex is built around ACTR1A/ACTB filament and consists of an actin-related filament composed of a shoulder domain, a pointed end and a barbed end. Its length is defined by its flexible shoulder domain. The soulder is composed of 2 DCTN1 subunits, 4 DCTN2 and 2 DCTN3. The 4 DCNT2 (via N-terminus) bind the ACTR1A filament and act as molecular rulers to determine the length. The pointed end is important for binding dynein-dynactin cargo adapters and consists of 4 subunits: ACTR10, DCNT4, DCTN5 and DCTN6. The barbed end is composed of a CAPZA1:CAPZB heterodimers, which binds ACTR1A/ACTB filament and dynactin and stabilizes dynactin. Interacts with BICD2 and CEP135. Interacts with DYNAP. Interacts with ECPAS. Interacts with MAPRE1.

It localises to the cytoplasm. The protein resides in the cytoskeleton. The protein localises to the microtubule organizing center. It is found in the centrosome. Its subcellular location is the membrane. Its function is as follows. Part of the dynactin complex that activates the molecular motor dynein for ultra-processive transport along microtubules. In the dynactin soulder domain, binds the ACTR1A filament and acts as a molecular ruler to determine the length. Modulates cytoplasmic dynein binding to an organelle, and plays a role in prometaphase chromosome alignment and spindle organization during mitosis. Involved in anchoring microtubules to centrosomes. May play a role in synapse formation during brain development. The sequence is that of Dynactin subunit 2 from Homo sapiens (Human).